The primary structure comprises 342 residues: Phosphate acyltransferase (342 aa).

Belongs to the PlsX family. Homodimer. Probably interacts with PlsY.

Its subcellular location is the cytoplasm. It catalyses the reaction a fatty acyl-[ACP] + phosphate = an acyl phosphate + holo-[ACP]. The protein operates within lipid metabolism; phospholipid metabolism. Functionally, catalyzes the reversible formation of acyl-phosphate (acyl-PO(4)) from acyl-[acyl-carrier-protein] (acyl-ACP). This enzyme utilizes acyl-ACP as fatty acyl donor, but not acyl-CoA. This is Phosphate acyltransferase from Pelotomaculum thermopropionicum (strain DSM 13744 / JCM 10971 / SI).